The chain runs to 449 residues: Probable glycine dehydrogenase (decarboxylating) subunit 1 (449 aa).

The protein belongs to the GcvP family. N-terminal subunit subfamily. In terms of assembly, the glycine cleavage system is composed of four proteins: P, T, L and H. In this organism, the P 'protein' is a heterodimer of two subunits.

The enzyme catalyses N(6)-[(R)-lipoyl]-L-lysyl-[glycine-cleavage complex H protein] + glycine + H(+) = N(6)-[(R)-S(8)-aminomethyldihydrolipoyl]-L-lysyl-[glycine-cleavage complex H protein] + CO2. In terms of biological role, the glycine cleavage system catalyzes the degradation of glycine. The P protein binds the alpha-amino group of glycine through its pyridoxal phosphate cofactor; CO(2) is released and the remaining methylamine moiety is then transferred to the lipoamide cofactor of the H protein. This Pyrococcus abyssi (strain GE5 / Orsay) protein is Probable glycine dehydrogenase (decarboxylating) subunit 1.